The chain runs to 219 residues: Germin-like protein subfamily 2 member 2 (219 aa).

The signal sequence occupies residues 1–22 (MMNSRISIIIALSCIMITSIRA). Cys-32 and Cys-47 are disulfide-bonded. N-linked (GlcNAc...) asparagine glycosylation is found at Asn-52 and Asn-70. The Cupin type-1 domain maps to 59 to 209 (FFAGISKPAV…TFQVGSKMVD (151 aa)). Mn(2+) is bound by residues His-109, His-111, Glu-116, and His-155.

Belongs to the germin family. Oligomer (believed to be a pentamer but probably hexamer).

It localises to the secreted. The protein localises to the extracellular space. The protein resides in the apoplast. Its function is as follows. May play a role in plant defense. Probably has no oxalate oxidase activity even if the active site is conserved. The polypeptide is Germin-like protein subfamily 2 member 2 (Arabidopsis thaliana (Mouse-ear cress)).